Consider the following 372-residue polypeptide: MGVDMGELRGAHVPVLLERCLELLAPALGRAGRTVYVDATLGLGGHAEAVLATHPQTMLVGLDRDTEALAHARVRLARFADRVHLEHAVYDELPDVLDRLGHPVVDGILFDLGVSSLQLDAPDRGFAYAQDAPLDMRMDQTRGLTAEEVVNTYPHPDLARVLRVYGEEKFAPRIASAIVRERERDPITSSARLAELVRQTIPAPARRTGGHPAKRTFQALRIEVNRELAALETALPAALDRLTIEGRLVVLSYHSLEDRLTKVALADRVRSKGPVDLPVELPGTGPTFRLLSRGAELPGEAEVAMNPRAASVRLRAAERLDPTAEQRRRTDRERYRRRVRAMHQPGTGSAVRRPTPGDDGTGTDEEGEGHDS.

S-adenosyl-L-methionine contacts are provided by residues 44 to 46, Asp-63, Leu-97, Asp-111, and Gln-118; that span reads GGH. The segment covering 315-334 has biased composition (basic and acidic residues); that stretch reads RAAERLDPTAEQRRRTDRER. Residues 315–372 are disordered; the sequence is RAAERLDPTAEQRRRTDRERYRRRVRAMHQPGTGSAVRRPTPGDDGTGTDEEGEGHDS. The segment covering 361–372 has biased composition (acidic residues); the sequence is TGTDEEGEGHDS.

It belongs to the methyltransferase superfamily. RsmH family.

It localises to the cytoplasm. The catalysed reaction is cytidine(1402) in 16S rRNA + S-adenosyl-L-methionine = N(4)-methylcytidine(1402) in 16S rRNA + S-adenosyl-L-homocysteine + H(+). Functionally, specifically methylates the N4 position of cytidine in position 1402 (C1402) of 16S rRNA. This Salinispora arenicola (strain CNS-205) protein is Ribosomal RNA small subunit methyltransferase H.